The chain runs to 329 residues: Probable allantoicase (329 aa).

Belongs to the allantoicase family.

It carries out the reaction allantoate + H2O = (S)-ureidoglycolate + urea. It functions in the pathway nitrogen metabolism; (S)-allantoin degradation; (S)-ureidoglycolate from allantoate (aminidohydrolase route): step 1/1. The protein is Probable allantoicase of Nocardia farcinica (strain IFM 10152).